A 488-amino-acid chain; its full sequence is Ribulose bisphosphate carboxylase large chain (488 aa).

Asn127 and Thr177 together coordinate substrate. Lys179 serves as the catalytic Proton acceptor. A substrate-binding site is contributed by Lys181. Mg(2+)-binding residues include Lys205, Asp207, and Glu208. Lys205 is modified (N6-carboxylysine). The active-site Proton acceptor is the His297. 3 residues coordinate substrate: Arg298, His330, and Ser382.

The protein belongs to the RuBisCO large chain family. Type I subfamily. Heterohexadecamer of 8 large chains and 8 small chains. Mg(2+) serves as cofactor.

It is found in the plastid. The protein localises to the chloroplast. It carries out the reaction 2 (2R)-3-phosphoglycerate + 2 H(+) = D-ribulose 1,5-bisphosphate + CO2 + H2O. The catalysed reaction is D-ribulose 1,5-bisphosphate + O2 = 2-phosphoglycolate + (2R)-3-phosphoglycerate + 2 H(+). Functionally, ruBisCO catalyzes two reactions: the carboxylation of D-ribulose 1,5-bisphosphate, the primary event in carbon dioxide fixation, as well as the oxidative fragmentation of the pentose substrate in the photorespiration process. Both reactions occur simultaneously and in competition at the same active site. In Antithamnion sp. (Red alga), this protein is Ribulose bisphosphate carboxylase large chain.